We begin with the raw amino-acid sequence, 296 residues long: 4-hydroxybenzoate octaprenyltransferase (296 aa).

9 helical membrane passes run 29 to 49 (IGIY…AEGV), 55 to 75 (LFIF…INDY), 102 to 122 (ALVL…FTNA), 124 to 141 (TIWL…YPFM), 146 to 166 (FYPQ…AFTA), 169 to 189 (GSLP…TVAY), 216 to 236 (ADRL…LLAG), 239 to 259 (FELG…FVWE), and 271 to 291 (CFNA…GIVL).

The protein belongs to the UbiA prenyltransferase family. Mg(2+) serves as cofactor.

It localises to the cell inner membrane. The catalysed reaction is all-trans-octaprenyl diphosphate + 4-hydroxybenzoate = 4-hydroxy-3-(all-trans-octaprenyl)benzoate + diphosphate. It participates in cofactor biosynthesis; ubiquinone biosynthesis. Its function is as follows. Catalyzes the prenylation of para-hydroxybenzoate (PHB) with an all-trans polyprenyl group. Mediates the second step in the final reaction sequence of ubiquinone-8 (UQ-8) biosynthesis, which is the condensation of the polyisoprenoid side chain with PHB, generating the first membrane-bound Q intermediate 3-octaprenyl-4-hydroxybenzoate. The sequence is that of 4-hydroxybenzoate octaprenyltransferase from Ectopseudomonas mendocina (strain ymp) (Pseudomonas mendocina).